The primary structure comprises 101 residues: Large ribosomal subunit protein uL24 (101 aa).

This sequence belongs to the universal ribosomal protein uL24 family. In terms of assembly, part of the 50S ribosomal subunit.

Its function is as follows. One of two assembly initiator proteins, it binds directly to the 5'-end of the 23S rRNA, where it nucleates assembly of the 50S subunit. Functionally, one of the proteins that surrounds the polypeptide exit tunnel on the outside of the subunit. The chain is Large ribosomal subunit protein uL24 from Ligilactobacillus salivarius (strain UCC118) (Lactobacillus salivarius).